The sequence spans 365 residues: tRNA 2-selenouridine synthase (365 aa).

A Rhodanese domain is found at 15–138; the sequence is FVNDHPIMDA…MRQFLIETID (124 aa). Cys-98 acts as the S-selanylcysteine intermediate in catalysis.

This sequence belongs to the SelU family. Monomer.

The enzyme catalyses 5-methylaminomethyl-2-thiouridine(34) in tRNA + selenophosphate + (2E)-geranyl diphosphate + H2O + H(+) = 5-methylaminomethyl-2-selenouridine(34) in tRNA + (2E)-thiogeraniol + phosphate + diphosphate. It catalyses the reaction 5-methylaminomethyl-2-thiouridine(34) in tRNA + (2E)-geranyl diphosphate = 5-methylaminomethyl-S-(2E)-geranyl-thiouridine(34) in tRNA + diphosphate. The catalysed reaction is 5-methylaminomethyl-S-(2E)-geranyl-thiouridine(34) in tRNA + selenophosphate + H(+) = 5-methylaminomethyl-2-(Se-phospho)selenouridine(34) in tRNA + (2E)-thiogeraniol. It carries out the reaction 5-methylaminomethyl-2-(Se-phospho)selenouridine(34) in tRNA + H2O = 5-methylaminomethyl-2-selenouridine(34) in tRNA + phosphate. Involved in the post-transcriptional modification of the uridine at the wobble position (U34) of tRNA(Lys), tRNA(Glu) and tRNA(Gln). Catalyzes the conversion of 2-thiouridine (S2U-RNA) to 2-selenouridine (Se2U-RNA). Acts in a two-step process involving geranylation of 2-thiouridine (S2U) to S-geranyl-2-thiouridine (geS2U) and subsequent selenation of the latter derivative to 2-selenouridine (Se2U) in the tRNA chain. In Shewanella halifaxensis (strain HAW-EB4), this protein is tRNA 2-selenouridine synthase.